Reading from the N-terminus, the 160-residue chain is S-adenosylmethionine decarboxylase proenzyme (160 aa).

Serine 73 (schiff-base intermediate with substrate; via pyruvic acid) is an active-site residue. A Pyruvic acid (Ser); by autocatalysis modification is found at serine 73. Histidine 78 functions as the Proton acceptor; for processing activity in the catalytic mechanism. Cysteine 93 functions as the Proton donor; for catalytic activity in the catalytic mechanism.

This sequence belongs to the prokaryotic AdoMetDC family. Type 1 subfamily. Heterotetramer of two alpha and two beta chains arranged as a dimer of alpha/beta heterodimers. Pyruvate serves as cofactor. Post-translationally, is synthesized initially as an inactive proenzyme. Formation of the active enzyme involves a self-maturation process in which the active site pyruvoyl group is generated from an internal serine residue via an autocatalytic post-translational modification. Two non-identical subunits are generated from the proenzyme in this reaction, and the pyruvate is formed at the N-terminus of the alpha chain, which is derived from the carboxyl end of the proenzyme. The post-translation cleavage follows an unusual pathway, termed non-hydrolytic serinolysis, in which the side chain hydroxyl group of the serine supplies its oxygen atom to form the C-terminus of the beta chain, while the remainder of the serine residue undergoes an oxidative deamination to produce ammonia and the pyruvoyl group blocking the N-terminus of the alpha chain.

It carries out the reaction S-adenosyl-L-methionine + H(+) = S-adenosyl 3-(methylsulfanyl)propylamine + CO2. It participates in amine and polyamine biosynthesis; S-adenosylmethioninamine biosynthesis; S-adenosylmethioninamine from S-adenosyl-L-methionine: step 1/1. In terms of biological role, catalyzes the decarboxylation of S-adenosylmethionine to S-adenosylmethioninamine (dcAdoMet), the propylamine donor required for the synthesis of the polyamines spermine and spermidine from the diamine putrescine. The protein is S-adenosylmethionine decarboxylase proenzyme of Pseudomonas aeruginosa (strain LESB58).